Here is a 358-residue protein sequence, read N- to C-terminus: MLPDAKLDILLARHAALEAELLGQLNAEAYVRATRELAELTPVVDAVKAYRAGASELSDLDAMIDDPTTDAEMRAMAESERPVLQERQENLEQQIRIALLPKDAMDERNVVLEVRAGTGGDEASLFAGDLFRMYERFAALQGWKVEVISASEGTVGGYKEIVAQVQGRGAFAKLKFESGVHRVQRVPDTEASGRIHTSAATVAVLPEAEEIDIDIKDTDLRIETMRAQGAGGQHVNKTESAIRITHIPTGIVVMMQDSRSQHKNRASAMNILRSRILDAERQRAASERSADRRGQVGSGDRSERVRTYNFPQGRVTDHRINLTLYKLPQVIAGEALNELIDALTTEHQAALLATETSA.

An N5-methylglutamine modification is found at Gln233. Positions 282–306 (QRAASERSADRRGQVGSGDRSERVR) are enriched in basic and acidic residues. The disordered stretch occupies residues 282 to 308 (QRAASERSADRRGQVGSGDRSERVRTY).

This sequence belongs to the prokaryotic/mitochondrial release factor family. In terms of processing, methylated by PrmC. Methylation increases the termination efficiency of RF1.

Its subcellular location is the cytoplasm. In terms of biological role, peptide chain release factor 1 directs the termination of translation in response to the peptide chain termination codons UAG and UAA. This is Peptide chain release factor 1 from Afipia carboxidovorans (strain ATCC 49405 / DSM 1227 / KCTC 32145 / OM5) (Oligotropha carboxidovorans).